The chain runs to 313 residues: Acetaldehyde dehydrogenase (313 aa).

Residue 12-15 (SGNI) participates in NAD(+) binding. Catalysis depends on C132, which acts as the Acyl-thioester intermediate. NAD(+)-binding positions include 163-171 (SAGPGTRAN) and N291.

It belongs to the acetaldehyde dehydrogenase family.

It carries out the reaction acetaldehyde + NAD(+) + CoA = acetyl-CoA + NADH + H(+). The protein is Acetaldehyde dehydrogenase (bphG) of Burkholderia cepacia (Pseudomonas cepacia).